Here is a 436-residue protein sequence, read N- to C-terminus: Testis-expressed protein 44 (436 aa).

Composition is skewed to acidic residues over residues 1-10 (MTTEPLEDPE) and 45-54 (LPDEVPPEDI). Disordered stretches follow at residues 1-142 (MTTE…LTSL) and 165-307 (AENN…SLYG). 2 stretches are compositionally biased toward polar residues: residues 81 to 103 (ASMQ…TDTS) and 167 to 195 (NNRT…TVSE). The span at 234-247 (EPTKSADQEAEDFK) shows a compositional bias: basic and acidic residues. Over residues 273-289 (QAPPSPNSPADSPPPSP) the composition is skewed to pro residues. The residue at position 375 (Ser375) is a Phosphoserine.

It localises to the cytoplasm. This chain is Testis-expressed protein 44 (Tex44), found in Rattus norvegicus (Rat).